Reading from the N-terminus, the 1110-residue chain is Nitric oxide synthase 3 (1110 aa).

The disordered stretch occupies residues 1–74; that stretch reads MGNFKSVGQE…PPEGPKFPRV (74 aa). A compositionally biased stretch (gly residues) spans 15–27; the sequence is CGLGLGLGLGLCG. Over residues 31-40 the composition is skewed to low complexity; sequence PASPAPVSAS. Residues 47 to 69 show a composition bias toward pro residues; that stretch reads SSPPLPLPAPEHSPPLTRPPEGP. 2 residues coordinate Zn(2+): cysteine 97 and cysteine 102. The interval 101–489 is interaction with NOSIP; that stretch reads RCLGSLVFPR…PDPWKGSGTK (389 aa). Serine 105 provides a ligand contact to (6R)-L-erythro-5,6,7,8-tetrahydrobiopterin. Serine 117 carries the post-translational modification Phosphoserine. Cysteine 187 lines the heme b pocket. L-arginine contacts are provided by glutamine 250, tryptophan 359, tyrosine 360, and glutamate 364. Position 368 (arginine 368) interacts with (6R)-L-erythro-5,6,7,8-tetrahydrobiopterin. Asparagine 369 is a binding site for L-arginine. Positions 449, 450, and 463 each coordinate (6R)-L-erythro-5,6,7,8-tetrahydrobiopterin. Position 478 (tyrosine 478) interacts with heme b. A Phosphothreonine modification is found at threonine 498. FMN contacts are provided by serine 529, glutamate 530, threonine 531, arginine 533, serine 575, and threonine 576. Phosphoserine is present on residues serine 618, serine 636, and serine 641. 4 residues coordinate FMN: serine 657, cysteine 664, glutamate 690, and glutamine 694. Arginine 779 is a binding site for NADP(+). Residue histidine 801 coordinates FAD. The disordered stretch occupies residues 821–848; sequence EDPPPPAESVAVEQLEKGSPGGPPPGWV. At serine 839 the chain carries Phosphoserine. Residues arginine 941, tyrosine 943, serine 944, threonine 959, alanine 961, tyrosine 965, valine 978, cysteine 979, and serine 980 each coordinate FAD. Positions 1019, 1052, 1081, 1082, and 1088 each coordinate NADP(+).

This sequence belongs to the NOS family. In terms of assembly, homodimer. Interacts with NOSIP and NOSTRIN. Interacts with HSP90AB1. Forms a complex with ASL, ASS1 and SLC7A1; the complex regulates cell-autonomous L-arginine synthesis and citrulline recycling while channeling extracellular L-arginine to nitric oxide synthesis pathway. It depends on heme b as a cofactor. The cofactor is FAD. FMN is required as a cofactor. (6R)-L-erythro-5,6,7,8-tetrahydrobiopterin serves as cofactor.

The protein resides in the membrane. Its subcellular location is the caveola. It localises to the cytoplasm. The protein localises to the cytoskeleton. It is found in the golgi apparatus. The protein resides in the cell membrane. The enzyme catalyses 2 L-arginine + 3 NADPH + 4 O2 + H(+) = 2 L-citrulline + 2 nitric oxide + 3 NADP(+) + 4 H2O. Stimulated by calcium/calmodulin. Inhibited by NOSIP and NOSTRIN. Functionally, produces nitric oxide (NO) which is implicated in vascular smooth muscle relaxation through a cGMP-mediated signal transduction pathway. NO mediates vascular endothelial growth factor (VEGF)-induced angiogenesis in coronary vessels and promotes blood clotting through the activation of platelets. In Cavia porcellus (Guinea pig), this protein is Nitric oxide synthase 3 (NOS3).